Reading from the N-terminus, the 37-residue chain is Ice-structuring protein 3 (37 aa).

It belongs to the type-I AFP family.

Contributes to protect fish blood from freezing at subzero sea water temperatures. Lowers the blood freezing point. Binds to nascent ice crystals and prevents further growth. This is Ice-structuring protein 3 from Pseudopleuronectes americanus (Winter flounder).